The sequence spans 695 residues: tRNA wybutosine-synthesizing protein 4 (695 aa).

Residues Lys38, Arg88, Gly115, Asp146–Tyr147, Asp196–Leu197, and Glu224 each bind S-adenosyl-L-methionine. Catalysis depends on Arg88, which acts as the Proton donor; for both methylation and methoxycarbonylation activities. Tyr229 serves as the catalytic Proton acceptor; for methoxycarbonylation activity.

It belongs to the methyltransferase superfamily. LCMT family.

Its subcellular location is the cytoplasm. It localises to the mitochondrion. The catalysed reaction is 7-[(3S)-3-amino-3-carboxypropyl]wyosine(37) in tRNA(Phe) + S-adenosyl-L-methionine = 7-[(3S)-(3-amino-3-methoxycarbonyl)propyl]wyosine(37) in tRNA(Phe) + S-adenosyl-L-homocysteine. The enzyme catalyses 7-[(3S)-(3-amino-3-methoxycarbonyl)propyl]wyosine(37) in tRNA(Phe) + S-adenosyl-L-methionine + CO2 = wybutosine(37) in tRNA(Phe) + S-adenosyl-L-homocysteine + 2 H(+). It functions in the pathway tRNA modification; wybutosine-tRNA(Phe) biosynthesis. Its function is as follows. S-adenosyl-L-methionine-dependent methyltransferase that acts as a component of the wybutosine biosynthesis pathway. Wybutosine is a hyper modified guanosine with a tricyclic base found at the 3'-position adjacent to the anticodon of eukaryotic phenylalanine tRNA. Catalyzes the final 2 independent reactions, methylation of the alpha-carboxy group of wybutosine-72 to form wybutosine-58, and methoxycarbonylation of alpha-amino group of wybutosine-58 through the fixation of CO(2) to complete wybutosine. This Saccharomyces cerevisiae (strain ATCC 204508 / S288c) (Baker's yeast) protein is tRNA wybutosine-synthesizing protein 4 (PPM2).